We begin with the raw amino-acid sequence, 143 residues long: Transcriptional regulator SlyA (143 aa).

The HTH marR-type domain occupies 2–135; it reads ESTLGSDLAR…LSGLIDKLEK (134 aa). The H-T-H motif DNA-binding region spans 49 to 72; sequence QIQLAKAIGIEQPSLVRTLDQLEE.

Belongs to the SlyA family. In terms of assembly, homodimer.

In terms of biological role, transcription regulator that can specifically activate or repress expression of target genes. This Yersinia pestis bv. Antiqua (strain Antiqua) protein is Transcriptional regulator SlyA.